Here is a 581-residue protein sequence, read N- to C-terminus: Protein alan shepard (581 aa).

Positions 1 to 10 (MHPRYSPAPP) are enriched in pro residues. Residues 1–73 (MHPRYSPAPP…AVTAAPPTPR (73 aa)) are disordered. Y5 carries the phosphotyrosine modification. The span at 35 to 54 (ANNSQQLPPQMPRSQNYANG) shows a compositional bias: polar residues. Positions 55-68 (SSSSAAAASAVTAA) are enriched in low complexity. Phosphotyrosine occurs at positions 128 and 146. Residues 168–226 (PATTTYGQRVPTAASPSNTNSSSSSNTGSQSGTLSTSLSHTTNTNTNMGPNGTAQNQNQ) show a composition bias toward low complexity. The tract at residues 168–234 (PATTTYGQRV…NQQGGGGEQL (67 aa)) is disordered. RRM domains follow at residues 237–310 (TNLY…MAKQ) and 316–395 (TNLY…FADG). Positions 555 to 581 (MTDSEQASTAASPDEAYTQYPHQAAPK) are disordered.

Functionally, has a role in the perception of gravity. The chain is Protein alan shepard from Drosophila willistoni (Fruit fly).